The sequence spans 179 residues: Large ribosomal subunit protein uL6 (179 aa).

It belongs to the universal ribosomal protein uL6 family. As to quaternary structure, part of the 50S ribosomal subunit.

Functionally, this protein binds to the 23S rRNA, and is important in its secondary structure. It is located near the subunit interface in the base of the L7/L12 stalk, and near the tRNA binding site of the peptidyltransferase center. This is Large ribosomal subunit protein uL6 from Bifidobacterium adolescentis (strain ATCC 15703 / DSM 20083 / NCTC 11814 / E194a).